The following is a 345-amino-acid chain: Aurora kinase B (345 aa).

A disordered region spans residues 1–25 (MAQKENAYPWPYGSKTSQSGLNTLS). Residues 14–25 (SKTSQSGLNTLS) are compositionally biased toward polar residues. Thr35 carries the phosphothreonine modification. The interval 50–77 (TAAPGQKLAENKSQGSTASQGSQNKQPF) is disordered. The span at 60-77 (NKSQGSTASQGSQNKQPF) shows a compositional bias: polar residues. Ser62 is modified (phosphoserine). One can recognise a Protein kinase domain in the interval 82–332 (FEIGRPLGKG…LAEVAAHPWV (251 aa)). ATP contacts are provided by residues 88 to 96 (LGKGKFGNV) and Lys111. The active-site Proton acceptor is the Asp205. Lys220 carries the post-translational modification N6-acetyllysine. At Ser232 the chain carries Phosphoserine. Thr237 is modified (phosphothreonine; by autocatalysis).

It belongs to the protein kinase superfamily. Ser/Thr protein kinase family. Aurora subfamily. As to quaternary structure, component of the chromosomal passenger complex (CPC) composed of at least BIRC5/survivin, CDCA8/borealin, INCENP, AURKB or AURKC; predominantly independent AURKB- and AURKC-containing complexes exist. Associates with RACGAP1 during M phase. Interacts with SPDYC; this interaction may be required for proper localization of active, Thr-237-phosphorylated AURKB form during prometaphase and metaphase. Interacts with p53/TP53. Interacts (via the middle kinase domain) with NOC2L (via the N- and C-terminus domains). Interacts with CDCA1. Interacts with EVI5. Interacts with JTB. Interacts with NDC80. Interacts with PSMA3. Interacts with RNF2/RING1B. Interacts with SEPTIN1. Interacts with SIRT2. Interacts with TACC1. Interacts with TTC28. The phosphorylation of Thr-237 requires the binding to INCENP and occurs by means of an autophosphorylation mechanism. Thr-237 phosphorylation is indispensable for the AURKB kinase activity. Post-translationally, acetylated at Lys-220 by KAT5 at kinetochores, increasing AURKB activity and promoting accurate chromosome segregation in mitosis. In terms of processing, ubiquitinated by different BCR (BTB-CUL3-RBX1) E3 ubiquitin ligase complexes. Ubiquitinated by the BCR(KLHL9-KLHL13) E3 ubiquitin ligase complex, ubiquitination leads to removal from mitotic chromosomes and is required for cytokinesis. During anaphase, the BCR(KLHL21) E3 ubiquitin ligase complex recruits the CPC complex from chromosomes to the spindle midzone and mediates the ubiquitination of AURKB. Ubiquitination of AURKB by BCR(KLHL21) E3 ubiquitin ligase complex may not lead to its degradation by the proteasome. Deubiquitinated by USP35; inhibiting CDH1-mediated degradation of AURKB. In terms of tissue distribution, expressed in testis, intestine and spleen. All of them are tissues that contain a large number of proliferating cells. Expressed during S phase, in a cell-cycle-dependent fashion.

The protein resides in the nucleus. The protein localises to the chromosome. Its subcellular location is the centromere. It is found in the kinetochore. It localises to the cytoplasm. The protein resides in the cytoskeleton. The protein localises to the spindle. Its subcellular location is the midbody. It carries out the reaction L-seryl-[protein] + ATP = O-phospho-L-seryl-[protein] + ADP + H(+). It catalyses the reaction L-threonyl-[protein] + ATP = O-phospho-L-threonyl-[protein] + ADP + H(+). With respect to regulation, activity is greatly increased when AURKB is within the CPC complex. In particular, AURKB-phosphorylated INCENP acts as an activator of AURKB. Positive feedback between HASPIN and AURKB contributes to CPC localization. Functionally, serine/threonine-protein kinase component of the chromosomal passenger complex (CPC), a complex that acts as a key regulator of mitosis. The CPC complex has essential functions at the centromere in ensuring correct chromosome alignment and segregation and is required for chromatin-induced microtubule stabilization and spindle assembly. Involved in the bipolar attachment of spindle microtubules to kinetochores and is a key regulator for the onset of cytokinesis during mitosis. Required for central/midzone spindle assembly and cleavage furrow formation. Key component of the cytokinesis checkpoint, a process required to delay abscission to prevent both premature resolution of intercellular chromosome bridges and accumulation of DNA damage: phosphorylates CHMP4C, leading to retain abscission-competent VPS4 (VPS4A and/or VPS4B) at the midbody ring until abscission checkpoint signaling is terminated at late cytokinesis. AURKB phosphorylates the CPC complex subunits BIRC5/survivin, CDCA8/borealin and INCENP. Phosphorylation of INCENP leads to increased AURKB activity. Other known AURKB substrates involved in centromeric functions and mitosis are CENPA, DES/desmin, GPAF, KIF2C, NSUN2, RACGAP1, SEPTIN1, VIM/vimentin, HASPIN, and histone H3. A positive feedback loop involving HASPIN and AURKB contributes to localization of CPC to centromeres. Phosphorylation of VIM controls vimentin filament segregation in cytokinetic process, whereas histone H3 is phosphorylated at 'Ser-10' and 'Ser-28' during mitosis (H3S10ph and H3S28ph, respectively). AURKB is also required for kinetochore localization of BUB1 and SGO1. Phosphorylation of p53/TP53 negatively regulates its transcriptional activity. Key regulator of active promoters in resting B- and T-lymphocytes: acts by mediating phosphorylation of H3S28ph at active promoters in resting B-cells, inhibiting RNF2/RING1B-mediated ubiquitination of histone H2A and enhancing binding and activity of the USP16 deubiquitinase at transcribed genes. Acts as an inhibitor of CGAS during mitosis: catalyzes phosphorylation of the N-terminus of CGAS during the G2-M transition, blocking CGAS liquid phase separation and activation, and thereby preventing CGAS-induced autoimmunity. Phosphorylates KRT5 during anaphase and telophase. Phosphorylates ATXN10 which promotes phosphorylation of ATXN10 by PLK1 and may play a role in the regulation of cytokinesis and stimulating the proteasomal degradation of ATXN10. In Mus musculus (Mouse), this protein is Aurora kinase B (Aurkb).